Consider the following 420-residue polypeptide: Dynein axonemal assembly factor 4 (420 aa).

The CS domain maps to 3–87; sequence LQVSDYSWQQ…KEAAMWETLS (85 aa). Positions 7–103 are mediates interaction with ESR1 and STUB1; sequence DYSWQQTKTA…EMMQRIREKS (97 aa). TPR repeat units lie at residues 290–323, 324–357, and 366–399; these read PEWL…NNKM, PLLY…LMPP, and MKAH…DPSN.

Interacts with ZMYND10. Interacts with STUB1. Interacts with ESR1 and ESR2. Interacts with DNAAF2. Interacts with CCT3, CCT4, CCT5 and CCT8. Interacts with DNAAF6/PIH1D3.

It is found in the nucleus. The protein localises to the cytoplasm. Its subcellular location is the cell projection. The protein resides in the neuron projection. It localises to the dynein axonemal particle. Involved in neuronal migration during development of the cerebral neocortex. May regulate the stability and proteasomal degradation of the estrogen receptors that play an important role in neuronal differentiation, survival and plasticity. Axonemal dynein assembly factor required for ciliary motility. The polypeptide is Dynein axonemal assembly factor 4 (Pan troglodytes (Chimpanzee)).